Reading from the N-terminus, the 178-residue chain is Large ribosomal subunit protein uL6 (178 aa).

The protein belongs to the universal ribosomal protein uL6 family. As to quaternary structure, part of the 50S ribosomal subunit.

Its function is as follows. This protein binds to the 23S rRNA, and is important in its secondary structure. It is located near the subunit interface in the base of the L7/L12 stalk, and near the tRNA binding site of the peptidyltransferase center. The protein is Large ribosomal subunit protein uL6 of Paenarthrobacter aurescens (strain TC1).